The primary structure comprises 199 residues: Recombination protein RecR (199 aa).

A C4-type zinc finger spans residues 58–73; sequence CARCGNITSADLCDIC. Residues 81–176 form the Toprim domain; that stretch reads GELCVVEDVA…QVTSLAQGVP (96 aa).

It belongs to the RecR family.

Its function is as follows. May play a role in DNA repair. It seems to be involved in an RecBC-independent recombinational process of DNA repair. It may act with RecF and RecO. In Cereibacter sphaeroides (strain ATCC 17025 / ATH 2.4.3) (Rhodobacter sphaeroides), this protein is Recombination protein RecR.